Reading from the N-terminus, the 160-residue chain is Cytochrome b6-f complex subunit 4 (160 aa).

3 helical membrane passes run 36–56, 95–115, and 131–151; these read LLYIFPVVILGTIACVVGLAV, LLGIALQTLIPLGLMILPFIE, and SVFLFGTFLTIYLGIGACLPI.

The protein belongs to the cytochrome b family. PetD subfamily. In terms of assembly, the 4 large subunits of the cytochrome b6-f complex are cytochrome b6, subunit IV (17 kDa polypeptide, PetD), cytochrome f and the Rieske protein, while the 4 small subunits are PetG, PetL, PetM and PetN. The complex functions as a dimer.

The protein resides in the cellular thylakoid membrane. In terms of biological role, component of the cytochrome b6-f complex, which mediates electron transfer between photosystem II (PSII) and photosystem I (PSI), cyclic electron flow around PSI, and state transitions. This Prochlorococcus marinus subsp. pastoris (strain CCMP1986 / NIES-2087 / MED4) protein is Cytochrome b6-f complex subunit 4.